Here is a 118-residue protein sequence, read N- to C-terminus: Peptidyl-prolyl cis-trans isomerase Pin1 (118 aa).

Disordered stretches follow at residues 1–37 (MSSE…ATTR) and 61–84 (LASR…GRGQ). The PpiC domain maps to 3-118 (SEKVRASHIL…SGVHIIKRTG (116 aa)). Basic residues predominate over residues 12-22 (LIKHQGSRRKS).

Belongs to the PpiC/parvulin rotamase family. In terms of processing, the N-terminus is blocked. In terms of tissue distribution, expressed in roots, stems, leaves, flowers and seedlings.

The protein resides in the cytoplasm. It is found in the nucleus. It carries out the reaction [protein]-peptidylproline (omega=180) = [protein]-peptidylproline (omega=0). Inhibited in vitro by juglone. Its function is as follows. Prolyl cis/trans isomerase with specificity for phospho-Ser-Pro bonds. In Digitalis lanata (Grecian foxglove), this protein is Peptidyl-prolyl cis-trans isomerase Pin1 (PARV12.8).